Reading from the N-terminus, the 245-residue chain is uncharacterized protein (245 aa).

Helical transmembrane passes span 10–30 (FYTL…SPWY), 94–114 (TLAF…YVHI), 134–154 (VLIG…FLII), and 196–216 (RGWI…IYCW).

Its subcellular location is the membrane. This is an uncharacterized protein from Dictyostelium discoideum (Social amoeba).